The following is a 369-amino-acid chain: Cyclic AMP receptor-like protein A (369 aa).

The Extracellular portion of the chain corresponds to 1 to 4 (MIQI). A helical membrane pass occupies residues 5-22 (LLSTFISFIIIIVSSNDI). At 23 to 72 (RSGENDNFNNNKMINNFLTTITTNDTIIIKETESPNDYDFSKEQIESLDK) the chain is on the cytoplasmic side. A helical membrane pass occupies residues 73–93 (IVYFSSTMGIVGALFIIVSFF). Over 94-100 (LFKAART) the chain is Extracellular. Residues 101-121 (FATKMIFFLSLSDLFAAIFYL) form a helical membrane-spanning segment. At 122 to 146 (PYYRDSDIMCNLQGMGLVFFLSSSY) the chain is on the cytoplasmic side. The chain crosses the membrane as a helical span at residues 147–167 (LWTMCISISLFMVFFTTIFEL). Topologically, residues 168–173 (NHWFKY) are extracellular. A helical transmembrane segment spans residues 174–194 (FHFICWGIPLFTAIISLIFHA). Residues 195–212 (YGKTGSWCFISDPTSIFR) lie on the Cytoplasmic side of the membrane. Residues 213 to 233 (LLYYLPLIVVFFINLVVFIAI) traverse the membrane as a helical segment. Over 234–247 (RWKISQHSNSLVSR) the chain is Extracellular. The chain crosses the membrane as a helical span at residues 248 to 268 (VNIIVSFYLIAFSLSQLPTII). Topologically, residues 269–369 (NSIQNFSDPD…KLIIDDYNRV (101 aa)) are cytoplasmic.

Belongs to the G-protein coupled receptor 5 family.

It is found in the membrane. Functionally, receptor for cAMP which may play a role in prestalk cell differentiation. May act as a negative regulator of cell growth. This is Cyclic AMP receptor-like protein A (crlA) from Dictyostelium discoideum (Social amoeba).